A 957-amino-acid polypeptide reads, in one-letter code: Glutamyl aminopeptidase (957 aa).

Topologically, residues 1 to 18 (MNFAEREGSKRYCIQTKH) are cytoplasmic. Residues 19 to 39 (VAILCAVVVGVGLIVGLAVGL) form a helical; Signal-anchor for type II membrane protein membrane-spanning segment. The Extracellular segment spans residues 40–957 (TRSCDSSGDG…EWFFNLLESG (918 aa)). Residues 44–83 (DSSGDGGPGTAPAPSHLPSSTASPSGPPAQDQDICPASED) are disordered. Asn-98 carries an N-linked (GlcNAc...) asparagine; atypical glycan. 2 N-linked (GlcNAc...) asparagine glycosylation sites follow: Asn-124 and Asn-197. Glu-223 serves as a coordination point for substrate. Residues Asn-324 and Asn-340 are each glycosylated (N-linked (GlcNAc...) asparagine). Residue 357–361 (GAMEN) coordinates substrate. Residue His-393 coordinates Zn(2+). The active-site Proton acceptor is Glu-394. Zn(2+)-binding residues include His-397 and Glu-416. Residues Asn-554, Asn-589, Asn-597, Asn-607, Asn-678, Asn-763, Asn-773, Asn-801, and Asn-828 are each glycosylated (N-linked (GlcNAc...) asparagine). Arg-887 contributes to the substrate binding site.

This sequence belongs to the peptidase M1 family. In terms of assembly, homodimer; disulfide-linked. It depends on Zn(2+) as a cofactor. Expressed in choriocarcinoma cancer cell lines (at protein level). Expressed by epithelial cells of the proximal tubule cells and the glomerulus of the nephron. Also found in a variety of other tissues.

It localises to the cell membrane. The enzyme catalyses Release of N-terminal glutamate (and to a lesser extent aspartate) from a peptide.. Its activity is regulated as follows. Substrate specificity is modulated by calcium which enhances the enzymatic activity for cleavage of acidic residues while reducing its activity with basic residues. Inhibited by aminopeptidase inhibitors amastatin and bestatin. Functionally, regulates central hypertension through its calcium-modulated preference to cleave N-terminal acidic residues from peptides such as angiotensin II. This chain is Glutamyl aminopeptidase (ENPEP), found in Homo sapiens (Human).